The sequence spans 43 residues: Protein PsbN (43 aa).

The helical transmembrane segment at 5–27 (TFLSIFISAALLGITGYSIYTAF) threads the bilayer.

Belongs to the PsbN family.

The protein localises to the plastid. Its subcellular location is the cyanelle thylakoid membrane. Its function is as follows. May play a role in photosystem I and II biogenesis. The sequence is that of Protein PsbN from Cyanophora paradoxa.